Reading from the N-terminus, the 541-residue chain is Transcription termination factor MTERF4, chloroplastic (541 aa).

The transit peptide at 1–45 (MKIRFCNGFTKPGFLLVHFEPPSFFAVRSRSLSDSTYGNLCNHKK) directs the protein to the chloroplast. Disordered stretches follow at residues 66 to 103 (SRSLDSPRRERSSRSSSSSGRDRDRDKDKGRDSKSLYS) and 503 to 541 (EVETDPSSFDMNTLMQPEREEESDSEYEEEEDDDDEEFA). The span at 85-99 (GRDRDRDKDKGRDSK) shows a compositional bias: basic and acidic residues. Over residues 507–517 (DPSSFDMNTLM) the composition is skewed to polar residues. Over residues 521-541 (REEESDSEYEEEEDDDDEEFA) the composition is skewed to acidic residues.

It belongs to the mTERF family.

The protein localises to the plastid. Its subcellular location is the chloroplast. It is found in the mitochondrion. Transcription termination factor required for processing and steady-state levels of plastid transcripts. Required for splicing of the chloroplastic Clp protease (ClpP) group IIa intron. Required for maturation of 16S rRNA and 23S rRNA in the chloroplast. Essential for embryogenesis. Required for the maintenance of the correct levels of transcripts in the mitochondria and chloroplasts. The polypeptide is Transcription termination factor MTERF4, chloroplastic (Arabidopsis thaliana (Mouse-ear cress)).